The following is an 805-amino-acid chain: Rho GTPase-activating protein 42 (805 aa).

The 256-residue stretch at 7-262 (EFSDSFLDSP…IRSAEQDFKA (256 aa)) folds into the BAR domain. Residues 225-262 (KQQLQFNLQNTRNNFESTRQEVENLMRRIRSAEQDFKA) adopt a coiled-coil conformation. The region spanning 265–374 (QWTMEGFLYV…WMEAMDGKEP (110 aa)) is the PH domain. In terms of domain architecture, Rho-GAP spans 376–572 (YTLPALLSKK…ILIENYDKIF (197 aa)). Disordered regions lie at residues 576-600 (PDPN…RSKA), 625-725 (SDTF…SELL), and 765-805 (VSRS…PGSV). The span at 626–654 (DTFSSSPSSTPMGSMESLSSHSSEQNSCS) shows a compositional bias: low complexity. Over residues 670 to 693 (LCWTTPSPSTNGPKSPACTTSPDS) the composition is skewed to polar residues. The segment covering 694-704 (SSKEDANKTDG) has biased composition (basic and acidic residues). A compositionally biased stretch (polar residues) spans 710 to 721 (LSTSPGDRSSPA). Basic and acidic residues predominate over residues 782–793 (PPKDGMRFRDDS).

May influence blood pressure by functioning as a GTPase-activating protein in vascular smooth muscle. This chain is Rho GTPase-activating protein 42, found in Danio rerio (Zebrafish).